We begin with the raw amino-acid sequence, 4486 residues long: Dynein axonemal heavy chain 9 (4486 aa).

Residues 1–1831 are stem; it reads MRLAEERAAL…FANICDAQFL (1831 aa). Coiled coils occupy residues 381 to 410, 504 to 529, 639 to 662, 752 to 823, and 1326 to 1355; these read DLLRSEVEESQRKLQVVSDTLSFFKQEFQD, QSTDFENDVSEFNQKVEDLDRRLGTI, AEGKRMQQKYEDMLSLLEKYETRL, TLLE…TWVT, and NINVEAMELECKQFARHIRNLDKEVRAWDA. AAA regions lie at residues 1832–2053, 2113–2334, 2440–2688, and 2787–3036; these read YSYE…VLVV, ALVR…TRFK, EFDP…IFQG, and NHNE…EQRY. ATP is bound by residues 1870–1877, 2151–2158, 2478–2485, and 2825–2832; these read GPAGTGKT, GGAGTGKS, GTAGTGKS, and GVGGSGKQ. Coiled-coil stretches lie at residues 3051–3154, 3285–3341, and 3640–3675; these read YQSL…AKAE, KRQA…AEVT, and LVENLEITKQTAAEVEKKVQEAKVTEVKINEAREHY. The segment at 3051–3341 is stalk; it reads YQSLLHRHRK…LKCQQEAEVT (291 aa). AAA regions lie at residues 3429–3656 and 3866–4092; these read LMDD…EVEK and LRDF…VLYN.

Belongs to the dynein heavy chain family. In terms of assembly, consists of at least two heavy chains and a number of intermediate and light chains. Interacts with ODAD1. In terms of tissue distribution, expressed in upper and lower respiratory airway epithelia (at protein level). Not detected in spermatozoa (at protein level).

Its subcellular location is the cytoplasm. The protein resides in the cytoskeleton. It localises to the cilium axoneme. Functionally, force generating protein required for cilia beating in respiratory epithelia. Produces force towards the minus ends of microtubules. Dynein has ATPase activity; the force-producing power stroke is thought to occur on release of ADP. The sequence is that of Dynein axonemal heavy chain 9 from Homo sapiens (Human).